Consider the following 128-residue polypeptide: Large ribosomal subunit protein uL22 (128 aa).

It belongs to the universal ribosomal protein uL22 family. Part of the 50S ribosomal subunit.

This protein binds specifically to 23S rRNA; its binding is stimulated by other ribosomal proteins, e.g. L4, L17, and L20. It is important during the early stages of 50S assembly. It makes multiple contacts with different domains of the 23S rRNA in the assembled 50S subunit and ribosome. Its function is as follows. The globular domain of the protein is located near the polypeptide exit tunnel on the outside of the subunit, while an extended beta-hairpin is found that lines the wall of the exit tunnel in the center of the 70S ribosome. This chain is Large ribosomal subunit protein uL22, found in Rhodopseudomonas palustris (strain BisB18).